We begin with the raw amino-acid sequence, 319 residues long: Ribonuclease Z (319 aa).

The Zn(2+) site is built by H62, H64, D66, H67, H139, D209, and H268. D66 acts as the Proton acceptor in catalysis.

This sequence belongs to the RNase Z family. As to quaternary structure, homodimer. Requires Zn(2+) as cofactor.

The catalysed reaction is Endonucleolytic cleavage of RNA, removing extra 3' nucleotides from tRNA precursor, generating 3' termini of tRNAs. A 3'-hydroxy group is left at the tRNA terminus and a 5'-phosphoryl group is left at the trailer molecule.. Functionally, zinc phosphodiesterase, which displays some tRNA 3'-processing endonuclease activity. Probably involved in tRNA maturation, by removing a 3'-trailer from precursor tRNA. This is Ribonuclease Z from Pseudomonas putida (strain GB-1).